The following is a 311-amino-acid chain: Ribosomal protein L11 methyltransferase (311 aa).

4 residues coordinate S-adenosyl-L-methionine: T162, G183, D205, and N248.

This sequence belongs to the methyltransferase superfamily. PrmA family.

The protein localises to the cytoplasm. The enzyme catalyses L-lysyl-[protein] + 3 S-adenosyl-L-methionine = N(6),N(6),N(6)-trimethyl-L-lysyl-[protein] + 3 S-adenosyl-L-homocysteine + 3 H(+). Methylates ribosomal protein L11. The chain is Ribosomal protein L11 methyltransferase from Bacillus licheniformis (strain ATCC 14580 / DSM 13 / JCM 2505 / CCUG 7422 / NBRC 12200 / NCIMB 9375 / NCTC 10341 / NRRL NRS-1264 / Gibson 46).